The chain runs to 1164 residues: Phospholipid-transporting ATPase IA (1164 aa).

Topologically, residues 1–65 (MPTMRRTVSE…TAKYNIITFL (65 aa)) are cytoplasmic. Position 25 is a phosphoserine (Ser-25). Thr-28 bears the Phosphothreonine mark. Ser-29 carries the phosphoserine modification. A helical transmembrane segment spans residues 66–86 (PRFLYSQFRRAANSFFLFIAL). Residues 87 to 92 (LQQIPD) lie on the Exoplasmic loop side of the membrane. Residues 93-115 (VSPTGRYTTLVPLLFILAVAAIK) form a helical membrane-spanning segment. Topologically, residues 116–297 (EIIEDIKRHK…SNVERITNVQ (182 aa)) are cytoplasmic. The chain crosses the membrane as a helical span at residues 298-319 (ILILFCILIAMSLVCSVGSAIW). The Exoplasmic loop segment spans residues 320–344 (NRRHSGKDWYLNLNYGGASNFGLNF). The helical transmembrane segment at 345–366 (LTFIILFNNLIPISLLVTLEVV) threads the bilayer. Over 367–857 (KFTQAYFINW…GAWNYNRVSK (491 aa)) the chain is Cytoplasmic. Asp-409 functions as the 4-aspartylphosphate intermediate in the catalytic mechanism. Residues Asp-409, Lys-410, and Thr-411 each contribute to the ATP site. A Mg(2+)-binding site is contributed by Asp-409. Residue Thr-411 coordinates Mg(2+). A Phosphoserine modification is found at Ser-443. Residues Glu-508, Phe-549, Lys-572, Arg-605, Thr-685, Gly-686, Asp-687, 741-748 (ALIIDGKT), Arg-775, and Lys-781 contribute to the ATP site. Asp-801 contributes to the Mg(2+) binding site. ATP is bound by residues Asn-804 and Asp-805. Asp-805 serves as a coordination point for Mg(2+). A helical transmembrane segment spans residues 858 to 878 (CILYCFYKNIVLYIIEIWFAF). Residues 879–890 (VNGFSGQILFER) are Exoplasmic loop-facing. Residues 891–910 (WCIGLYNVMFTAMPPLTLGI) traverse the membrane as a helical segment. Residues 911–940 (FERSCRKENMLKYPELYKTSQNALDFNTKV) are Cytoplasmic-facing. A helical membrane pass occupies residues 941-962 (FWVHCLNGLFHSVILFWFPLKA). The Exoplasmic loop segment spans residues 963 to 976 (LQYGTAFGNGKTSD). Residues 977–999 (YLLLGNFVYTFVVITVCLKAGLE) form a helical membrane-spanning segment. Over 1000 to 1005 (TSYWTW) the chain is Cytoplasmic. The helical transmembrane segment at 1006–1026 (FSHIAIWGSIALWVVFFGIYS) threads the bilayer. The Exoplasmic loop portion of the chain corresponds to 1027 to 1044 (SLWPAIPMAPDMSGEAAM). A helical transmembrane segment spans residues 1045-1070 (LFSSGVFWMGLLFIPVASLLLDVVYK). Topologically, residues 1071–1164 (VIKRTAFKTL…DTTKQRPDEW (94 aa)) are cytoplasmic. Position 1095 to 1102 (1095 to 1102 (GAVVLGKS)) interacts with ATP. Ser-1126 carries the phosphoserine modification.

The protein belongs to the cation transport ATPase (P-type) (TC 3.A.3) family. Type IV subfamily. Component of a P4-ATPase flippase complex which consists of a catalytic alpha subunit and an accessory beta subunit. Interacts with TMEM30A to form a flippase complex; this complex forms an intermediate phosphoenzyme. Interacts with TMEM30B; this interaction is reported conflictingly. Mg(2+) serves as cofactor. Cleaved by calpain in a caspase- and calcium influx-dependent manner during platelet apoptosis leading to a 100 kDa polypeptide. As to expression, found in most adult tissues except liver, testis and placenta. Most abundant in heart, brain and skeletal muscle. Also detected in fetal tissues. Isoform 1 is only detected in brain, skeletal muscle and heart and is the most abundant form in skeletal muscle. Highly expressed in platelets.

The protein localises to the cytoplasmic vesicle. Its subcellular location is the secretory vesicle. It is found in the chromaffin granule membrane. It localises to the cytoplasmic granule. The protein resides in the cell membrane. The protein localises to the endoplasmic reticulum. Its subcellular location is the golgi apparatus. It carries out the reaction ATP + H2O + phospholipidSide 1 = ADP + phosphate + phospholipidSide 2.. The catalysed reaction is a 1,2-diacyl-sn-glycero-3-phospho-L-serine(out) + ATP + H2O = a 1,2-diacyl-sn-glycero-3-phospho-L-serine(in) + ADP + phosphate + H(+). ATPase activity is stimulated by phosphatidylserine (PS) and minimally by phosphatidylethanolamine (PE). ATPase activity is inhibited by beryllium fluoride and aluminum trifluoride. Functionally, catalytic component of a P4-ATPase flippase complex which catalyzes the hydrolysis of ATP coupled to the transport of aminophospholipids from the outer to the inner leaflet of various membranes and ensures the maintenance of asymmetric distribution of phospholipids. Phospholipid translocation also seems to be implicated in vesicle formation and in uptake of lipid signaling molecules. In vitro, its ATPase activity is selectively and stereospecifically stimulated by phosphatidylserine (PS). The flippase complex ATP8A1:TMEM30A seems to play a role in regulation of cell migration probably involving flippase-mediated translocation of phosphatidylethanolamine (PE) at the cell membrane. Acts as aminophospholipid translocase at the cell membrane in neuronal cells. In Homo sapiens (Human), this protein is Phospholipid-transporting ATPase IA.